Reading from the N-terminus, the 121-residue chain is Fluoride-specific ion channel FluC 1 (121 aa).

4 consecutive transmembrane segments (helical) span residues 3-23 (YLYIFVGGALGALIRFCLSML), 29-49 (IPLGTFVANLLGAFLMGSIGA), 67-87 (TGLLGALTTFSTFQFELVTLF), and 92-112 (FILFTIYGVTSYILGILSCYL). Residues Gly71 and Thr74 each contribute to the Na(+) site.

This sequence belongs to the fluoride channel Fluc/FEX (TC 1.A.43) family.

It localises to the cell membrane. The enzyme catalyses fluoride(in) = fluoride(out). Na(+) is not transported, but it plays an essential structural role and its presence is essential for fluoride channel function. Fluoride-specific ion channel. Important for reducing fluoride concentration in the cell, thus reducing its toxicity. The sequence is that of Fluoride-specific ion channel FluC 1 from Staphylococcus epidermidis (strain ATCC 35984 / DSM 28319 / BCRC 17069 / CCUG 31568 / BM 3577 / RP62A).